A 384-amino-acid polypeptide reads, in one-letter code: Carbamoyl phosphate synthase small chain (384 aa).

Residues 1–193 are CPSase; sequence MTKPATTPAI…DSHPEIPASE (193 aa). 3 residues coordinate L-glutamine: Ser-51, Gly-245, and Gly-247. In terms of domain architecture, Glutamine amidotransferase type-1 spans 197–384; it reads HVVAYDYGVK…ISAMAPVVDR (188 aa). Cys-273 functions as the Nucleophile in the catalytic mechanism. L-glutamine contacts are provided by Leu-274, Gln-277, Asn-315, Gly-317, and Phe-318. Catalysis depends on residues His-357 and Glu-359.

Belongs to the CarA family. In terms of assembly, composed of two chains; the small (or glutamine) chain promotes the hydrolysis of glutamine to ammonia, which is used by the large (or ammonia) chain to synthesize carbamoyl phosphate. Tetramer of heterodimers (alpha,beta)4.

The enzyme catalyses hydrogencarbonate + L-glutamine + 2 ATP + H2O = carbamoyl phosphate + L-glutamate + 2 ADP + phosphate + 2 H(+). It catalyses the reaction L-glutamine + H2O = L-glutamate + NH4(+). Its pathway is amino-acid biosynthesis; L-arginine biosynthesis; carbamoyl phosphate from bicarbonate: step 1/1. It participates in pyrimidine metabolism; UMP biosynthesis via de novo pathway; (S)-dihydroorotate from bicarbonate: step 1/3. Functionally, small subunit of the glutamine-dependent carbamoyl phosphate synthetase (CPSase). CPSase catalyzes the formation of carbamoyl phosphate from the ammonia moiety of glutamine, carbonate, and phosphate donated by ATP, constituting the first step of 2 biosynthetic pathways, one leading to arginine and/or urea and the other to pyrimidine nucleotides. The small subunit (glutamine amidotransferase) binds and cleaves glutamine to supply the large subunit with the substrate ammonia. The sequence is that of Carbamoyl phosphate synthase small chain from Stutzerimonas stutzeri (Pseudomonas stutzeri).